A 509-amino-acid polypeptide reads, in one-letter code: 2-succinyl-5-enolpyruvyl-6-hydroxy-3-cyclohexene-1-carboxylate synthase (509 aa).

Belongs to the TPP enzyme family. MenD subfamily. As to quaternary structure, homodimer. It depends on Mg(2+) as a cofactor. Mn(2+) is required as a cofactor. The cofactor is thiamine diphosphate.

It carries out the reaction isochorismate + 2-oxoglutarate + H(+) = 5-enolpyruvoyl-6-hydroxy-2-succinyl-cyclohex-3-ene-1-carboxylate + CO2. It participates in quinol/quinone metabolism; 1,4-dihydroxy-2-naphthoate biosynthesis; 1,4-dihydroxy-2-naphthoate from chorismate: step 2/7. It functions in the pathway quinol/quinone metabolism; menaquinone biosynthesis. Its function is as follows. Catalyzes the thiamine diphosphate-dependent decarboxylation of 2-oxoglutarate and the subsequent addition of the resulting succinic semialdehyde-thiamine pyrophosphate anion to isochorismate to yield 2-succinyl-5-enolpyruvyl-6-hydroxy-3-cyclohexene-1-carboxylate (SEPHCHC). This Corynebacterium diphtheriae (strain ATCC 700971 / NCTC 13129 / Biotype gravis) protein is 2-succinyl-5-enolpyruvyl-6-hydroxy-3-cyclohexene-1-carboxylate synthase.